The chain runs to 273 residues: Lactose transport system permease protein LacG (273 aa).

The next 6 helical transmembrane spans lie at 15-35 (YSVL…MVIG), 77-97 (IALV…YGFE), 110-130 (VILL…FMLM), 134-154 (GLLN…FIIF), 182-204 (FFYI…VFML), and 240-260 (GTVM…FFAM). Residues 71-260 (FWNSVKIALV…LPTLLVFFAM (190 aa)) form the ABC transmembrane type-1 domain.

Belongs to the binding-protein-dependent transport system permease family. MalFG subfamily.

It is found in the cell inner membrane. In terms of biological role, part of the binding-protein-dependent transport system for lactose. Probably responsible for the translocation of the substrate across the membrane. This chain is Lactose transport system permease protein LacG (lacG), found in Rhizobium radiobacter (Agrobacterium tumefaciens).